The chain runs to 158 residues: 3-hydroxyacyl-[acyl-carrier-protein] dehydratase FabZ (158 aa).

Residue His-61 is part of the active site.

It belongs to the thioester dehydratase family. FabZ subfamily.

Its subcellular location is the cytoplasm. The catalysed reaction is a (3R)-hydroxyacyl-[ACP] = a (2E)-enoyl-[ACP] + H2O. Functionally, involved in unsaturated fatty acids biosynthesis. Catalyzes the dehydration of short chain beta-hydroxyacyl-ACPs and long chain saturated and unsaturated beta-hydroxyacyl-ACPs. This is 3-hydroxyacyl-[acyl-carrier-protein] dehydratase FabZ from Methylobacterium radiotolerans (strain ATCC 27329 / DSM 1819 / JCM 2831 / NBRC 15690 / NCIMB 10815 / 0-1).